We begin with the raw amino-acid sequence, 123 residues long: MPPKTSGKAAKKAGKAQKNITKTDKKKKRKRKESYAIYIYKVLKQVHPDTGISSKAMSIMNSFVNDIFERIAAEASRLAHYNKRSTITSREIQTAVRLLLPGELAKHAVSEGTKAVTKYTSSK.

Residues 1 to 30 (MPPKTSGKAAKKAGKAQKNITKTDKKKKRK) are disordered. Pro-2 bears the N-methylproline; partial mark. Position 44 is an N6-succinyllysine (Lys-44). Ser-110 is a glycosylation site (O-linked (GlcNAc) serine). Residues Lys-114 and Lys-118 each carry the N6-succinyllysine modification. A Glycyl lysine isopeptide (Lys-Gly) (interchain with G-Cter in ubiquitin) cross-link involves residue Lys-118.

This sequence belongs to the histone H2B family. As to quaternary structure, the nucleosome is a histone octamer containing two molecules each of H2A, H2B, H3 and H4 assembled in one H3-H4 heterotetramer and two H2A-H2B heterodimers. The octamer wraps approximately 147 bp of DNA. Post-translationally, phosphorylated by the catalytic component of the Dbf4-dependent kinase (DDK) complex Cdc7. In terms of processing, monoubiquitination of Lys-118 by Bre1 gives a specific tag for epigenetic transcriptional activation and is also prerequisite for histone H3 'Lys-4' and 'Lys-79' methylation. Deubiquitination of Lys-118 by the SAGA complex is involved in activating transcription of a large subset of genes. Methylation at Pro-2 increases upon heat shock. Post-translationally, glcNAcylation at Ser-110 promotes monoubiquitination of Lys-118. It fluctuates in response to extracellular glucose, and associates with transcribed genes.

The protein resides in the nucleus. The protein localises to the chromosome. Functionally, core component of nucleosome. Nucleosomes wrap and compact DNA into chromatin, limiting DNA accessibility to the cellular machineries which require DNA as a template. Histones thereby play a central role in transcription regulation, DNA repair, DNA replication and chromosomal stability. DNA accessibility is regulated via a complex set of post-translational modifications of histones, also called histone code, and nucleosome remodeling. This Drosophila erecta (Fruit fly) protein is Histone H2B (His2B).